The following is a 167-amino-acid chain: UPF0587 protein F46B6.12 (167 aa).

Zn(2+) is bound by residues Cys34, Cys37, Cys68, and Cys71.

This sequence belongs to the UPF0587 family.

The chain is UPF0587 protein F46B6.12 from Caenorhabditis elegans.